We begin with the raw amino-acid sequence, 331 residues long: Junctional sarcoplasmic reticulum protein 1 (331 aa).

Disordered regions lie at residues 1–118 (MSMT…EELP) and 157–331 (RVPE…KGRD). The tract at residues 3 to 76 (MTTRAWEELD…EKEPAARGTP (74 aa)) is mediates interaction with CACNA1S. 2 stretches are compositionally biased toward basic and acidic residues: residues 21 to 35 (LEDHSALAETQEDRA) and 61 to 71 (TRPKKMEKEPA). Composition is skewed to pro residues over residues 103–112 (PLQPPPPPPA) and 161–175 (PWVPPSSAPREPSSP). Composition is skewed to basic and acidic residues over residues 222–242 (AVREDRVTLADRGPKERPRRE) and 250–302 (PRKE…EPRK). Over residues 320–331 (SRQKLRAGKGRD) the composition is skewed to basic residues.

As to quaternary structure, interacts with CACNA1S, CACNB1 and calsequestrin.

It is found in the sarcoplasmic reticulum membrane. The protein resides in the endoplasmic reticulum membrane. Functionally, involved in skeletal muscle excitation/contraction coupling (EC), probably acting as a regulator of the voltage-sensitive calcium channel CACNA1S. EC is a physiological process whereby an electrical signal (depolarization of the plasma membrane) is converted into a chemical signal, a calcium gradient, by the opening of ryanodine receptor calcium release channels. May regulate CACNA1S membrane targeting and activity. The chain is Junctional sarcoplasmic reticulum protein 1 (JSRP1) from Homo sapiens (Human).